The following is a 332-amino-acid chain: Zinc finger protein CONSTANS-LIKE 13 (332 aa).

Residues cysteine 13, cysteine 16, cysteine 36, histidine 41, cysteine 56, cysteine 59, cysteine 79, and histidine 84 each contribute to the Zn(2+) site. Residues 13–55 form a B box-type 1; atypical zinc finger; the sequence is CDYCDSSVALVYCKADSAKLCLACDKQVHVANQLFAKHFRSLL. The segment at 56 to 96 adopts a B box-type 2; atypical zinc-finger fold; sequence CDSCNESPSSLFCETERSVLCQNCDWQHHTASSSLHSRRPF. Positions 287-329 constitute a CCT domain; sequence RNSALSRYKEKKKSRRYEKHIRYESRKVRAESRTRIRGRFAKA.

Belongs to the CONSTANS family.

It is found in the nucleus. This is Zinc finger protein CONSTANS-LIKE 13 (COL13) from Arabidopsis thaliana (Mouse-ear cress).